The following is a 209-amino-acid chain: Redox-sensing transcriptional repressor Rex (209 aa).

The segment at residues 16–55 (LYYRFIQNLSLSGKQRVSSAELSEAVKVDSATIRRDFSYF) is a DNA-binding region (H-T-H motif). 90-95 (GVGNLG) contributes to the NAD(+) binding site.

This sequence belongs to the transcriptional regulatory Rex family. Homodimer.

The protein localises to the cytoplasm. Its function is as follows. Modulates transcription in response to changes in cellular NADH/NAD(+) redox state. In Bacillus cereus (strain Q1), this protein is Redox-sensing transcriptional repressor Rex.